The primary structure comprises 186 residues: UPF0340 protein SEQ_1951 (186 aa).

Belongs to the UPF0340 family.

The chain is UPF0340 protein SEQ_1951 from Streptococcus equi subsp. equi (strain 4047).